We begin with the raw amino-acid sequence, 156 residues long: Small ribosomal subunit protein uS7 (156 aa).

It belongs to the universal ribosomal protein uS7 family. Part of the 30S ribosomal subunit. Contacts proteins S9 and S11.

One of the primary rRNA binding proteins, it binds directly to 16S rRNA where it nucleates assembly of the head domain of the 30S subunit. Is located at the subunit interface close to the decoding center, probably blocks exit of the E-site tRNA. The chain is Small ribosomal subunit protein uS7 from Mycobacterium leprae (strain Br4923).